A 149-amino-acid polypeptide reads, in one-letter code: Urease accessory protein UreE (149 aa).

Belongs to the UreE family.

It localises to the cytoplasm. Its function is as follows. Involved in urease metallocenter assembly. Binds nickel. Probably functions as a nickel donor during metallocenter assembly. In Synechococcus sp. (strain JA-3-3Ab) (Cyanobacteria bacterium Yellowstone A-Prime), this protein is Urease accessory protein UreE.